Reading from the N-terminus, the 102-residue chain is Small ribosomal subunit protein bS18c (102 aa).

Residues 1 to 19 are compositionally biased toward basic residues; that stretch reads MDKTKRPLRKSKRSFRRRL. The interval 1 to 26 is disordered; the sequence is MDKTKRPLRKSKRSFRRRLPPPIGSG.

The protein belongs to the bacterial ribosomal protein bS18 family. As to quaternary structure, part of the 30S ribosomal subunit.

Its subcellular location is the plastid. The protein localises to the chloroplast. The polypeptide is Small ribosomal subunit protein bS18c (Piper cenocladum (Ant piper)).